The following is a 1494-amino-acid chain: Neuropathy target esterase sws (1494 aa).

Residues 1-35 (MDVLELLRVSGSNMYYSTFLADAWCYYISNQITMT) are Lumenal-facing. A helical transmembrane segment spans residues 36–56 (MYLYCALGVLSMLFIGWFVYF). Over 57–1494 (KRLARLRLRH…NTNNETKNYL (1438 aa)) the chain is Cytoplasmic. 176–303 (IFGHFEKPIF…IRVIQVIMIR (128 aa)) provides a ligand contact to a nucleoside 3',5'-cyclic phosphate. Over residues 362 to 372 (ASGTAGSTHTA) the composition is skewed to low complexity. 2 disordered regions span residues 362–405 (ASGT…ELSG) and 422–452 (NSYP…QPEV). Polar residues predominate over residues 435–449 (GNLSTRRGSITQQEQ). At serine 443 the chain carries Phosphoserine. Residues 474–601 (ELGL…VVRR) and 590–717 (IVLD…LSHR) each bind a nucleoside 3',5'-cyclic phosphate. The PNPLA domain maps to 944–1110 (LVLGGGGARG…VNNLPGHLWR (167 aa)). Residues 948–953 (GGGARG) carry the GXGXXG motif. The short motif at 975 to 979 (GVSIG) is the GXSXG element. The active-site Nucleophile is the serine 977. The Proton acceptor role is filled by aspartate 1097. The DGA/G motif lies at 1097–1099 (DGG). The segment at 1367-1494 (MDKATQSTPP…NTNNETKNYL (128 aa)) is disordered. The span at 1370–1381 (ATQSTPPLQSKA) shows a compositional bias: polar residues. Composition is skewed to basic and acidic residues over residues 1389-1420 (SKEE…RELS) and 1452-1483 (MDKK…KENR). Residues 1484 to 1494 (SNTNNETKNYL) show a composition bias toward polar residues.

This sequence belongs to the NTE family. In terms of assembly, interacts with Pka-C3; interaction inhibits the catalytic function of Pka-C3 and the esterase activity of sws.

The protein resides in the endoplasmic reticulum membrane. The catalysed reaction is a 1-acyl-sn-glycero-3-phosphocholine + H2O = sn-glycerol 3-phosphocholine + a fatty acid + H(+). In terms of biological role, phospholipase B that deacylates intracellular phosphatidylcholine (PtdCho), generating glycerophosphocholine (GroPtdCho). This deacylation occurs at both sn-2 and sn-1 positions of PtdCho. Its specific chemical modification by certain organophosphorus (OP) compounds leads to distal axonopathy. Plays a role in the signaling mechanism between neurons and glia that regulates glia wrapping during development of the adult brain. Essential for membrane lipid homeostasis and cell survival in both neurons and glia of the adult brain. The chain is Neuropathy target esterase sws from Drosophila pseudoobscura pseudoobscura (Fruit fly).